A 2167-amino-acid polypeptide reads, in one-letter code: SH3 and multiple ankyrin repeat domains protein 1 (2167 aa).

The disordered stretch occupies residues 1–63 (MTHSPATSED…TRGLQGRSMS (63 aa)). Residues 17-32 (SECPEGGSESDSSPDG) show a composition bias toward low complexity. The span at 33–47 (PGRGPQGTRGRGSGA) shows a compositional bias: gly residues. At Arg43 the chain carries Omega-N-methylarginine. Tyr186 bears the Phosphotyrosine mark. ANK repeat units lie at residues 195 to 210 (VARLLDKGLDPNYHDS), 212 to 245 (SGETPLTLAAQTEGSVEVIRTLCLGGAHIDFRAR), 246 to 278 (DGMTALHKAACARHCLALTALLDLGGSPNYKDR), 279 to 312 (RGLTPLFHTAMVGGDPRCCELLLYNRAQLGIADE), 313 to 345 (NGWQEIHQACQRGHSQHLEHLLFYGAEPGAQNA), 346 to 378 (SGNTALHICALYNKETCARILLYRGANKDVKNN), and 379 to 395 (NGQTPFQVAVIAGNFEL). Disordered stretches follow at residues 413–432 (SPKYAARRRGPPGAGLTVPP) and 453–546 (APGA…SRGR). Residues 453–479 (APGASSSGTPGPTSGPQGQSQPSAPST) are compositionally biased toward low complexity. Gly residues predominate over residues 527 to 542 (PAGGTGGSGGPGGSLG). Ser540 is subject to Phosphoserine. The residue at position 544 (Arg544) is an Omega-N-methylarginine. The 60-residue stretch at 554-613 (VPGRSFMAVKSYQAQGEGEISLSKGEKIKVLSIGEGGFWEGQVKGRVGWFPSDCLEEVAN) folds into the SH3 domain. Residues Ser638, Ser641, Ser671, and Ser791 each carry the phosphoserine modification. In terms of domain architecture, PDZ spans 663–757 (TVLLQKKDSE…TLMVKVVMVT (95 aa)). The segment at 841-894 (ISASESPGPGGLASLGKHRPKGFFATESSFDPHHRSQPSYDRPSFLPPGPGLML) is disordered. Ser898 carries the post-translational modification Phosphoserine. 8 disordered regions span residues 917 to 1233 (SRSL…LDFT), 1245 to 1294 (RREG…SIDE), 1308 to 1417 (GGSS…VLRL), 1429 to 1725 (RAGL…AGVA), 1740 to 1787 (GQAF…DPVT), 1842 to 1866 (KLLPWEEGPGPPPPPLPGPLSQPQA), 1898 to 1988 (PWAR…STRH), and 2002 to 2029 (RRAPSPSLLPASDHKVSPAPRPSSLPIL). Over residues 928 to 947 (IPPPPTTSPPEPPYSTPPAP) the composition is skewed to pro residues. Arg958 is modified (omega-N-methylarginine). The span at 964–980 (PSSGGPLPASSPSSFDG) shows a compositional bias: low complexity. Positions 1004 to 1028 (AHHHPPHHHHHHAPPPQPHHHHAHP) are enriched in basic residues. Position 1059 is an omega-N-methylarginine (Arg1059). Residues 1064–1085 (SPTSGAPSPSHHSSSGGSSGPT) show a composition bias toward low complexity. 2 positions are modified to omega-N-methylarginine: Arg1098 and Arg1109. Low complexity-rich tracts occupy residues 1132-1146 (SIPSASSPTSPALPR) and 1171-1184 (STSSSGRSSQGSST). A compositionally biased stretch (pro residues) spans 1203–1224 (SPAPATSPVPPSPSPVPTPASP). The span at 1245–1256 (RREGGWQNEARR) shows a compositional bias: basic and acidic residues. Residue Arg1257 is modified to Asymmetric dimethylarginine. Residue Ser1291 is modified to Phosphoserine. Residues 1363-1372 (ARERALKESS) are compositionally biased toward basic and acidic residues. Pro residues predominate over residues 1378–1395 (PQPPPRPPSPRYDAPPPT). Basic residues predominate over residues 1396–1408 (LHHHSPHSPHSPH). An Omega-N-methylarginine modification is found at Arg1429. The residue at position 1442 (Ser1442) is a Phosphoserine. 2 stretches are compositionally biased toward low complexity: residues 1459-1469 (PGVGPLLLQLG) and 1530-1541 (RRVLPTSPTSPR). A compositionally biased stretch (pro residues) spans 1589–1615 (PLTPGPPHPLPDPPSPATPLPAAPPPA). Polar residues predominate over residues 1624-1641 (DSTASSLTSYDSEVATLT). The segment covering 1648-1676 (PGDPPAPGPPAPAAPAPPAPQPGPDPPPG) has biased composition (pro residues). A compositionally biased stretch (basic and acidic residues) spans 1684–1694 (VDSRSSSDHPL). The segment covering 1695–1708 (ETISSASTLSSLSA) has biased composition (low complexity). The segment covering 1709–1724 (EGGGNTGGVAGGGAGV) has biased composition (gly residues). Over residues 1850 to 1861 (PGPPPPPLPGPL) the composition is skewed to pro residues. An Omega-N-methylarginine modification is found at Arg1901. Composition is skewed to low complexity over residues 1934-1945 (SQTSLLSKPSSS), 1960-1985 (TGSGVSSSTAAAPGATSPSASSASAS), and 2002-2012 (RRAPSPSLLPA). Omega-N-methylarginine occurs at positions 2022, 2042, and 2080. The SAM domain maps to 2104-2167 (WTKFDVADWL…DRALKFFLER (64 aa)).

Belongs to the SHANK family. In terms of assembly, may homomultimerize via its SAM domain. Interacts with the C-terminus of SSTR2 via the PDZ domain. Interacts with SHARPIN, SPTAN1 and DLGAP1/GKAP. Part of a complex with DLG4/PSD-95 and DLGAP1/GKAP. Interacts with BAIAP2. Interacts with IGSF9. Interacts with HOMER1 and HOMER3. As to expression, expressed only in brain (neuropil of cortex, CA1 region hippocampus and molecular layer of cerebellum).

The protein resides in the cytoplasm. It is found in the synapse. It localises to the postsynaptic density. Seems to be an adapter protein in the postsynaptic density (PSD) of excitatory synapses that interconnects receptors of the postsynaptic membrane including NMDA-type and metabotropic glutamate receptors, and the actin-based cytoskeleton. Plays a role in the structural and functional organization of the dendritic spine and synaptic junction. Overexpression promotes maturation of dendritic spines and the enlargement of spine heads via its ability to recruit Homer to postsynaptic sites, and enhances presynaptic function. The polypeptide is SH3 and multiple ankyrin repeat domains protein 1 (Shank1) (Rattus norvegicus (Rat)).